A 371-amino-acid chain; its full sequence is Cytochrome b (371 aa).

The next 8 membrane-spanning stretches (helical) occupy residues 25-45, 69-90, 105-125, 170-190, 218-238, 280-300, 312-332, and 339-358; these read FGSM…FLAV, WMMQ…YIHI, WLSG…GXXX, XXXX…XXXX, YKDL…VSFL, LGGA…PFTH, IMQL…WAAT, and FTMI…IMNP. Heme b is bound by residues histidine 75 and histidine 89. Heme b-binding residues include residue 174 and residue 188.

This sequence belongs to the cytochrome b family. As to quaternary structure, the cytochrome bc1 complex contains 3 respiratory subunits (MT-CYB, CYC1 and UQCRFS1), 2 core proteins (UQCRC1 and UQCRC2) and probably 6 low-molecular weight proteins. Requires heme b as cofactor.

The protein localises to the mitochondrion inner membrane. Component of the ubiquinol-cytochrome c reductase complex (complex III or cytochrome b-c1 complex) that is part of the mitochondrial respiratory chain. The b-c1 complex mediates electron transfer from ubiquinol to cytochrome c. Contributes to the generation of a proton gradient across the mitochondrial membrane that is then used for ATP synthesis. This is Cytochrome b (MT-CYB) from Eryx tataricus (Tartar sand boa).